The chain runs to 480 residues: Ribulose bisphosphate carboxylase large chain (480 aa).

A propeptide spanning residues 1-2 is cleaved from the precursor; sequence MS. Pro3 is modified (N-acetylproline). Lys14 carries the N6,N6,N6-trimethyllysine modification. Substrate-binding residues include Asn123 and Thr173. The active-site Proton acceptor is Lys175. Substrate is bound at residue Lys177. Lys201, Asp203, and Glu204 together coordinate Mg(2+). Lys201 carries the post-translational modification N6-carboxylysine. The active-site Proton acceptor is His294. Substrate contacts are provided by Arg295, His327, and Ser379.

The protein belongs to the RuBisCO large chain family. Type I subfamily. Heterohexadecamer of 8 large chains and 8 small chains; disulfide-linked. The disulfide link is formed within the large subunit homodimers. Requires Mg(2+) as cofactor. In terms of processing, the disulfide bond which can form in the large chain dimeric partners within the hexadecamer appears to be associated with oxidative stress and protein turnover.

Its subcellular location is the plastid. The protein localises to the chloroplast. The enzyme catalyses 2 (2R)-3-phosphoglycerate + 2 H(+) = D-ribulose 1,5-bisphosphate + CO2 + H2O. It carries out the reaction D-ribulose 1,5-bisphosphate + O2 = 2-phosphoglycolate + (2R)-3-phosphoglycerate + 2 H(+). Functionally, ruBisCO catalyzes two reactions: the carboxylation of D-ribulose 1,5-bisphosphate, the primary event in carbon dioxide fixation, as well as the oxidative fragmentation of the pentose substrate in the photorespiration process. Both reactions occur simultaneously and in competition at the same active site. This Phalaenopsis aphrodite subsp. formosana (Moth orchid) protein is Ribulose bisphosphate carboxylase large chain.